Here is a 268-residue protein sequence, read N- to C-terminus: MKRCCEGVGLPCLFKGVGMASSRPPKYLLVFDFDGTIINESSDDSIVRAAPGQALPEHIRQSFREGFYNEYMQRVLAYMGDQGVKMGDFKAVYENIPLSPGMPDLFQFLSKNHELFEIILISDANMFGIECKLRAAGFYSLFRKIFSNPSSFDKRGYFTLGPYHSHKCLDCPANTCKRKILTEYLAERAQEEVEFERVFYVGDGANDFCPSVTLTSADVAFPRKGYPMHQMTQEMEKKQPGTFQATVVPWESATEVARYLQELLKKKC.

The Nucleophile role is filled by D32. Residues D32 and D34 each coordinate Mg(2+). D34 (proton donor) is an active-site residue. Substrate-binding residues include D43 and D123. D203 is a Mg(2+) binding site.

The protein belongs to the HAD-like hydrolase superfamily. PHOSPHO family. The cofactor is Mg(2+). As to expression, expressed at sites of mineralization in bone and cartilage. Highly expressed in hypertrophic chondrocytes compared to non-chondrogenic tissues. Expressed in chondrocytes but not in heart, liver, lung, kidney, spleen, muscle, adipose tissues not duodenum. In diaphyseal cortical bone, it is expressed in the osteoid layer of the periosteum, forming surfaces of growing osteons, and newly formed osteocytes, whereas it is not expressed in the endosteum and closed osteons. In growth plate cartilage, it is limited to the early hypertrophic chondrocytes and the ossification groove of Ranvier. Highly expressed on the mineralization surfaces of the cartilage remnants and trabecular bone within the primary spongiosa. Expressed in 17-day-old embryonic calvaria, the osteoid present on the intramembranous and periosteal bone surfaces but not in soft tissues examined.

The protein resides in the extracellular vesicle. The catalysed reaction is phosphoethanolamine + H2O = ethanolamine + phosphate. It carries out the reaction phosphocholine + H2O = choline + phosphate. Its function is as follows. Phosphatase that has a high activity toward phosphoethanolamine (PEA) and phosphocholine (PCho). Involved in the generation of inorganic phosphate for bone mineralization. The sequence is that of Phosphoethanolamine/phosphocholine phosphatase (PHOSPHO1) from Gallus gallus (Chicken).